Here is a 629-residue protein sequence, read N- to C-terminus: G1-specific transcription factors activator MSA1 (629 aa).

Basic residues predominate over residues 1–11 (MDKSMIKKRGR). Disordered regions lie at residues 1 to 60 (MDKS…KRRL), 83 to 106 (STPTKKSSTNGSTPISTPSSNDSY), 217 to 286 (YCDT…SSLQ), 455 to 485 (VQVQSQSNSPTQRQQQQRQFQIPPPHINMNS), and 586 to 629 (PNLH…IDDQ). Residues 21-37 (PLQSPMAHSSMQVQKQG) are compositionally biased toward polar residues. Residues 245 to 260 (IETSASPIGSARNNNI) are compositionally biased toward polar residues. Composition is skewed to low complexity over residues 261–277 (LLSQPPQSPPSSAQLKP) and 455–475 (VQVQSQSNSPTQRQQQQRQFQ). At Ser268 the chain carries Phosphoserine. Over residues 614 to 629 (KQDDARTALKRLIDDQ) the composition is skewed to basic and acidic residues.

Interacts with transcription complexes SCB-binding factor (SBF) and MCB-binding factor (MBF) at their target promoters. Interacts with MBP1 and SWI6. In terms of processing, phosphorylated by CDC28.

Functionally, activator of G1-specific transcription factors, MBF and SBF. Promotes both the timing of G1-specific gene transcription and cell cycle initiation. Associates with SBF- and MBF-regulated target promoters and this binding is maximal during the G1 phase, prior to maximum budding. Affects cell cycle initiation by advancing the timing of transcription of G1-specific genes. Overexpression advances the timing of SBF-dependent transcription and budding. Depletion delays both indicators of cell cycle initiation. This is G1-specific transcription factors activator MSA1 (MSA1) from Saccharomyces cerevisiae (strain ATCC 204508 / S288c) (Baker's yeast).